Here is a 194-residue protein sequence, read N- to C-terminus: Calcium channel flower (194 aa).

3 helical membrane passes run 35–55, 66–88, and 113–133; these read LGIV…FSII, IIQM…VCFE, and AIPP…GLIF.

The protein belongs to the calcium channel flower family. In terms of assembly, homomultimer. Associates with the dally/ magu complex.

It localises to the cytoplasmic vesicle. The protein localises to the secretory vesicle. The protein resides in the synaptic vesicle membrane. Its subcellular location is the presynaptic cell membrane. It is found in the endosome. Its activity is regulated as follows. Channel activity is inhibited by La(3+), which reduces Ca(2+) influx and thus inhibits it's function in promoting activity-dependent bulk endocytosis (ADBE) in response to high stimuli. Its function is as follows. Transmembrane protein which mediates synaptic endocytosis, fitness-based cell culling, neuronal culling, morphogen gradient scaling, and calcium transport. Regulates synaptic endocytosis and hence couples exo- with endocytosis. Controls two major modes of synaptic vesicle (SV) endocytosis in the synaptic boutons of neuromuscular junctions (NMJs); Ca(2+) channel-independent Clathrin-mediated endocytosis (CME) in response to mild stimulation, and Ca(2+) channel-dependent activity-dependent bulk endocytosis (ADBE) in response to strong stimulation. Functions in ADBE and subsequent SV reformation from bulk endosomes by initiating Ca(2+) channel-dependent phosphatidylinositol 4,5-bisphosphate (PtdIns(4,5)P2) compartmentalization in synaptic boutons. There it acts at the periactive zone to provide the low Ca(2+) levels required to initiate Calcineurin activation and upregulate PtdIns(4,5)P2. Conversely PtdIns(4,5)P2 enhances fwe Ca(2+) channel-activity, establishing a positive feedback loop that induces PtdIns(4,5)P2 microdomain at the periactive zone. These microdomains trigger bulk membrane invagination (i.e. ADBE) by triggering actin polymerization while also promoting localization of fwe to bulk endosomes, thereby removing the ADBE trigger to reduce endocytosis and prevent excess membrane uptake. PtdIns(4,5)P2 then promotes SV reformation from the bulk endosomes, to coordinate ADBE and subsequent SV reformation. Different combinations of the flower isoforms at the cell membrane are also required for the identification and elimination of suboptimal or supernumerary cells during development, regeneration, and adulthood. Required for the recognition and elimination of unfit cells in the developing wing during cell competition. In the developing pupal retina, mediates the elimination of unwanted postmitotic neurons, including supernumerary photoreceptor neurons that form at the periphery of the retina and are contained within incomplete ommatidia units. Also required for efficient elimination and replacement of old neurons by newly generated neurons during regeneration in the adult brain following mechanical injury. Downstream of the flower fitness fingerprints, cells identified as unwanted or unfit are eliminated via apoptosis through the expression of ahuizotl (azot). However, the cells marked for elimination by the flower isoforms only undergo apoptosis if additional thresholds are met; (1) their neighboring fit/healthy cells express different levels of the fwe isoforms, and (2) the levels of the protective signal SPARC expressed by the loser or unwanted cells are unable to inhibit caspase activation. These additional thresholds for flower-mediated apoptosis, allows useful cells to recover from transient and limited stress before they are unnecessarily eliminated. Functions with dally and magu in a mechanism of scaling, which utilises apoptosis to ensure that the dpp morphogen gradient, which mediates organ growth, remains proportional to the size of the growing wing. In this mechanism, fwe represses dally- and Magu-dependent activity in expanding the gradient, and dally/Magu inhibits fwe-dependent apoptosis to keep cell death rate low. When the levels of these different proteins are optimally regulated the gradient correctly scales with organ growth but when this fails, fwe-mediated apoptosis is activated to trim the developing tissue to match the correct size of the gradient. The protein is Calcium channel flower of Drosophila yakuba (Fruit fly).